Consider the following 229-residue polypeptide: UPF0758 protein GSU0386 (229 aa).

The 123-residue stretch at 107 to 229 (RFTSPEQVYN…FTSFVSAGLL (123 aa)) folds into the MPN domain. His-178, His-180, and Asp-191 together coordinate Zn(2+). Residues 178 to 191 (HNHPTGDPAPSRED) carry the JAMM motif motif.

The protein belongs to the UPF0758 family.

This is UPF0758 protein GSU0386 from Geobacter sulfurreducens (strain ATCC 51573 / DSM 12127 / PCA).